The chain runs to 551 residues: Probable malate:quinone oxidoreductase (551 aa).

The segment covering 525-544 has biased composition (low complexity); it reads QTAAAAPQAQPQLKPQPDAK. The segment at 525-551 is disordered; sequence QTAAAAPQAQPQLKPQPDAKPVADIAL.

It belongs to the MQO family. The cofactor is FAD.

The catalysed reaction is (S)-malate + a quinone = a quinol + oxaloacetate. It participates in carbohydrate metabolism; tricarboxylic acid cycle; oxaloacetate from (S)-malate (quinone route): step 1/1. This chain is Probable malate:quinone oxidoreductase, found in Enterobacter sp. (strain 638).